A 247-amino-acid chain; its full sequence is uncharacterized protein (247 aa).

A run of 2 helical transmembrane segments spans residues 9–29 (IIAICLIFLSILVYSIHFLIF) and 37–57 (SYFLLHLAFVPIEVLLVSLII).

The protein localises to the cell membrane. This is an uncharacterized protein from Methanocaldococcus jannaschii (strain ATCC 43067 / DSM 2661 / JAL-1 / JCM 10045 / NBRC 100440) (Methanococcus jannaschii).